A 187-amino-acid chain; its full sequence is Large ribosomal subunit protein uL22 (187 aa).

Residues 155–187 (DAVSRAAPTDDAPAKKKLSKKKLARQKEKMMRE) form a disordered region. Positions 169–178 (KKKLSKKKLA) are enriched in basic residues.

The protein belongs to the universal ribosomal protein uL22 family.

The sequence is that of Large ribosomal subunit protein uL22 (RpL17) from Lonomia obliqua (Moth).